We begin with the raw amino-acid sequence, 2575 residues long: Non-reducing polyketide synthase pks11 (2575 aa).

The region spanning 89 to 228 (LANIILSPLV…ASKTVSTLQG (140 aa)) is the Starter acyltransferase (SAT) domain. Cys-129 functions as the Nucleophile; for transacylase activity in the catalytic mechanism. The active-site Proton donor/acceptor; for transacylase activity is the His-247. The Ketosynthase family 3 (KS3) domain maps to 373–790 (EDDIAVVGMS…GSNASAVVTE (418 aa)). Active-site for beta-ketoacyl synthase activity residues include Cys-538, His-673, and His-713. In terms of domain architecture, Malonyl-CoA:ACP transacylase (MAT) spans 901–1192 (FGGQISTYVG…TNMASRALGS (292 aa)). An N-terminal hotdog fold region spans residues 1276 to 1409 (PKGLWSFIDY…GQIIFVSTDN (134 aa)). Residues 1276-1586 (PKGLWSFIDY…YHKVAKATMS (311 aa)) form the PKS/mFAS DH domain. The interval 1307 to 1584 (LVSGHIIAQT…VNYHKVAKAT (278 aa)) is product template (PT) domain. His-1311 acts as the Proton acceptor; for dehydratase activity in catalysis. Positions 1437-1586 (ADDIIQGRNI…YHKVAKATMS (150 aa)) are C-terminal hotdog fold. Residue Asp-1493 is the Proton donor; for dehydratase activity of the active site. Over residues 1597 to 1606 (TTSTSTNVKS) the composition is skewed to polar residues. The segment at 1597-1636 (TTSTSTNVKSSPAAAEGSSPVENGASGSGSKAKKTKSGAG) is disordered. One can recognise a Carrier domain in the interval 1637 to 1711 (QDVVNKTKGL…GLVQIIKSTL (75 aa)). O-(pantetheine 4'-phosphoryl)serine is present on Ser-1671. The interval 1713 to 1762 (VSDDEEGSDQEGSEASSSESSTTFTPSTTATTVSDVEDNGNEKSIGKEKS) is disordered. A compositionally biased stretch (acidic residues) spans 1714-1724 (SDDEEGSDQEG). The segment covering 1725 to 1746 (SEASSSESSTTFTPSTTATTVS) has biased composition (low complexity). Over residues 1752–1762 (GNEKSIGKEKS) the composition is skewed to basic and acidic residues. Residues 1835–2130 (LTRIPHDPQH…HIDWTDGNSP (296 aa)) are methyltransferase domain. Residues 2204 to 2448 (ITGATGSLGS…LCWTPVDDVA (245 aa)) enclose the Thioester reductase (TE) domain.

Pantetheine 4'-phosphate is required as a cofactor.

It functions in the pathway secondary metabolite biosynthesis. Functionally, non-reducing polyketide synthase; part of the gene cluster that mediates the biosynthesis of mitorubrinol and mitorubrinic acid, two virulence factors that improve T.marneffei intracellular survival in macrophages. The two polyketide synthases pks12 and pks11 are probably responsible for sequential use in the biosynthesis of mitorubrinol and mitorubrinic acid. The first part of the biosynthesis is probably catalyzed by pks12, which synthesized orsellinic acid. This tetraketide is then used as a starter unit for pks11, which possesses a SAT domain, in the second part of the biosynthesis. Pks11, contains a methyltransferase domain, also served that methylates the products, using a methyl group from S-adenosylmethionine. In Talaromyces marneffei (Penicillium marneffei), this protein is Non-reducing polyketide synthase pks11.